The primary structure comprises 225 residues: UPF0758 protein Sbal223_0402 (225 aa).

The MPN domain maps to 102–224 (VLTNPDLTRD…IVSFAERGWI (123 aa)). The Zn(2+) site is built by His173, His175, and Asp186. The short motif at 173 to 186 (HNHPSGIAEPSQAD) is the JAMM motif element.

The protein belongs to the UPF0758 family.

In Shewanella baltica (strain OS223), this protein is UPF0758 protein Sbal223_0402.